The following is a 354-amino-acid chain: Mycothiol acetyltransferase (354 aa).

The segment covering 1 to 18 has biased composition (polar residues); that stretch reads MMVDNQTPDSSTLSTAST. Positions 1–21 are disordered; that stretch reads MMVDNQTPDSSTLSTASTPVY. 2 consecutive N-acetyltransferase domains span residues 21-176 and 191-354; these read YAEP…QTRE and LRMR…EPAA. Glu52 serves as a coordination point for 1D-myo-inositol 2-(L-cysteinylamino)-2-deoxy-alpha-D-glucopyranoside. 101-103 is a binding site for acetyl-CoA; the sequence is AAV. 1D-myo-inositol 2-(L-cysteinylamino)-2-deoxy-alpha-D-glucopyranoside contacts are provided by Glu217, Lys259, and Glu274. Acetyl-CoA is bound by residues 278–280 and 285–291; these read VGV and QGGGLGR. Tyr318 is a 1D-myo-inositol 2-(L-cysteinylamino)-2-deoxy-alpha-D-glucopyranoside binding site.

It belongs to the acetyltransferase family. MshD subfamily. As to quaternary structure, monomer.

It catalyses the reaction 1D-myo-inositol 2-(L-cysteinylamino)-2-deoxy-alpha-D-glucopyranoside + acetyl-CoA = mycothiol + CoA + H(+). Catalyzes the transfer of acetyl from acetyl-CoA to desacetylmycothiol (Cys-GlcN-Ins) to form mycothiol. This is Mycothiol acetyltransferase from Rothia mucilaginosa (strain DY-18) (Stomatococcus mucilaginosus).